The sequence spans 837 residues: Vacuolar membrane protease (837 aa).

Over 1–36 (MSEEEVHDTSSEASEVFTNQPNAFVRGVRSIFGYRK) the chain is Cytoplasmic. A helical membrane pass occupies residues 37–57 (TSLTLFVILTIVVTAGLSFYD). The Vacuolar portion of the chain corresponds to 58–355 (NSLELTIELP…FATPISALAR (298 aa)). Asn143 carries an N-linked (GlcNAc...) asparagine glycan. Residues His157 and Asp169 each coordinate Zn(2+). Glu201 (proton acceptor) is an active-site residue. Residues Glu202, Glu227, and His299 each contribute to the Zn(2+) site. A helical membrane pass occupies residues 356–376 (VNLVLLVLFPVVSTPLLFVIV). The Cytoplasmic portion of the chain corresponds to 377-384 (KYKKWKLR). A helical membrane pass occupies residues 385 to 405 (VTNFLGVPLAMGLAVAVGQVG). Over 406–415 (NPMLVSSHPM) the chain is Vacuolar. Residues 416 to 436 (MVVATTTSIVVLVYYVVLNGV) form a helical membrane-spanning segment. The Cytoplasmic segment spans residues 437 to 446 (DWVNTSSDQK). Residues 447 to 467 (LVTMIEVSFVYWVVLVYVTWS) traverse the membrane as a helical segment. Residues 468–474 (GGDHTGE) lie on the Vacuolar side of the membrane. A helical membrane pass occupies residues 475–495 (FGVTVLFFVQASTSLLGLIGW). Over 496–539 (TFTRVRGGDEPLLSGEEERYGTEDERDTEKPLVEHNYDWSLQYL) the chain is Cytoplasmic. A helical membrane pass occupies residues 540–560 (LIVPVSSLVVYNSGWLVLEGV). An N-linked (GlcNAc...) asparagine glycan is attached at Asn561. Over 561-572 (NKTVQESLASEH) the chain is Vacuolar. A helical transmembrane segment spans residues 573-593 (LIYWIVVVFSQFLVLPVVPFI). The Cytoplasmic segment spans residues 594–598 (TKFNR). A helical transmembrane segment spans residues 599 to 619 (YIVLGLSVVAVVGVLMSMAVH). Residues 620-837 (PFNQGSPMKL…LVGVVKHVDV (218 aa)) lie on the Vacuolar side of the membrane. Asn689 carries N-linked (GlcNAc...) asparagine glycosylation.

The protein belongs to the peptidase M28 family. The cofactor is Zn(2+).

It is found in the vacuole membrane. May be involved in vacuolar sorting and osmoregulation. The polypeptide is Vacuolar membrane protease (Candida albicans (strain WO-1) (Yeast)).